Reading from the N-terminus, the 358-residue chain is Insulin gene enhancer protein ISL-2A (358 aa).

2 LIM zinc-binding domains span residues 27-80 (CVGC…CKRD) and 89-143 (CANC…RADH). Positions 190-249 (TTRVRTVLNEKQLHTLRTCYNANPRPDALMKEQLVEMTGLSPRVIRVWFQNKRCKDKKRS) form a DNA-binding region, homeobox. Residues 325 to 335 (ESGSMGNSSGS) are compositionally biased toward low complexity. The segment at 325–358 (ESGSMGNSSGSDVTSLSSQLPDTPNSMVASPVDT) is disordered. Over residues 336-358 (DVTSLSSQLPDTPNSMVASPVDT) the composition is skewed to polar residues.

Its subcellular location is the nucleus. Binds to one of the cis-acting domain of the insulin gene enhancer. May be involved in subtype specialization of primary motoneurons. The polypeptide is Insulin gene enhancer protein ISL-2A (isl2a) (Oncorhynchus tshawytscha (Chinook salmon)).